Consider the following 489-residue polypeptide: Cytochrome P450 71A26 (489 aa).

A helical membrane pass occupies residues 1 to 21; sequence MMIMFFLLCSIIFVVTIIIFR. Residue C431 coordinates heme.

The protein belongs to the cytochrome P450 family. The cofactor is heme.

The protein localises to the membrane. The polypeptide is Cytochrome P450 71A26 (CYP71A26) (Arabidopsis thaliana (Mouse-ear cress)).